Here is a 163-residue protein sequence, read N- to C-terminus: NADH-quinone oxidoreductase subunit I (163 aa).

2 4Fe-4S ferredoxin-type domains span residues 53–83 (LRRY…IEAG) and 94–123 (TLYD…LTPE). Residues cysteine 63, cysteine 66, cysteine 69, cysteine 73, cysteine 103, cysteine 106, cysteine 109, and cysteine 113 each coordinate [4Fe-4S] cluster.

The protein belongs to the complex I 23 kDa subunit family. In terms of assembly, NDH-1 is composed of 14 different subunits. Subunits NuoA, H, J, K, L, M, N constitute the membrane sector of the complex. Requires [4Fe-4S] cluster as cofactor.

The protein localises to the cell inner membrane. The catalysed reaction is a quinone + NADH + 5 H(+)(in) = a quinol + NAD(+) + 4 H(+)(out). Functionally, NDH-1 shuttles electrons from NADH, via FMN and iron-sulfur (Fe-S) centers, to quinones in the respiratory chain. The immediate electron acceptor for the enzyme in this species is believed to be ubiquinone. Couples the redox reaction to proton translocation (for every two electrons transferred, four hydrogen ions are translocated across the cytoplasmic membrane), and thus conserves the redox energy in a proton gradient. This is NADH-quinone oxidoreductase subunit I from Coxiella burnetii (strain Dugway 5J108-111).